Here is a 110-residue protein sequence, read N- to C-terminus: MRYVAAYMLATLGGNEKPSESDLKKILDSVGIEVEKDQLTKVINELKGKNLDEVIAEGEKKLASVPSGGGVAAAAPAAGGGGADPAEAKEEKKEEPEEESDDDMGFGLFD.

The tract at residues 63–110 (ASVPSGGGVAAAAPAAGGGGADPAEAKEEKKEEPEEESDDDMGFGLFD) is disordered. Positions 86-95 (AEAKEEKKEE) are enriched in basic and acidic residues.

The protein belongs to the eukaryotic ribosomal protein P1/P2 family. P1 and P2 exist as dimers at the large ribosomal subunit. Post-translationally, phosphorylated.

Plays an important role in the elongation step of protein synthesis. This Cryptochiton stelleri (Giant gumboot chiton) protein is Large ribosomal subunit protein P2.